A 722-amino-acid chain; its full sequence is Inactive serine protease PAMR1 (722 aa).

The N-terminal stretch at 1–21 is a signal peptide; sequence MALLVWSSLVVASLHLLGTAA. An N-linked (GlcNAc...) asparagine glycan is attached at N98. 8 disulfide bridges follow: C130-C152, C179-C201, C241-C252, C246-C262, C264-C273, C282-C331, C317-C344, and C416-C444. A CUB domain is found at 130–238; sequence CGEVIQAARG…DGFYVTFEEV (109 aa). In terms of domain architecture, EGF-like spans 237-274; it reads EVTGCSSTPCFHDGTCIADKTGSYRCACLAGYTGRHCE. 2 consecutive Sushi domains span residues 280 to 346 and 393 to 446; these read KSCK…VCIK and KPAL…SCIP. N318 is a glycosylation site (N-linked (GlcNAc...) asparagine). Residues 447 to 722 enclose the Peptidase S1 domain; sequence ICGKLENFNI…FKEWLEKNMK (276 aa). The N-linked (GlcNAc...) asparagine glycan is linked to N455. An intrachain disulfide couples C491 to C507. An N-linked (GlcNAc...) asparagine glycan is attached at N616. Intrachain disulfides connect C632/C651 and C663/C699.

It belongs to the peptidase S1 family.

The protein localises to the secreted. Functionally, may play a role in regeneration of skeletal muscle. The protein is Inactive serine protease PAMR1 (pamr1) of Xenopus tropicalis (Western clawed frog).